Consider the following 805-residue polypeptide: Hypoxia-inducible factor 1-alpha (805 aa).

Residues 1-26 (MEGSVVVSEKKRISSERRKEKSRDAA) are disordered. Residues 8-26 (SEKKRISSERRKEKSRDAA) are compositionally biased toward basic and acidic residues. In terms of domain architecture, bHLH spans 17–70 (RRKEKSRDAARCRRSNESEVFYELSHELPLPHNVSSHLDKASIMRLDHQLPAVE). 2 consecutive PAS domains span residues 85-157 (DKQL…PAKK) and 229-300 (PHPS…TKGQ). The PAC domain occupies 303-346 (TGQYRMLAKKGGYVWVETQATVIYNSKNSQPQCIVCVNYVLSEV). A 4-hydroxyproline mark is found at Pro-404 and Pro-560. The interval 628 to 669 (KESTSAPVSPYNGNRSRTSSPVRPAKAVVDKTEKSRPGTPNL) is disordered. The span at 629–648 (ESTSAPVSPYNGNRSRTSSP) shows a compositional bias: polar residues. (3S)-3-hydroxyasparagine is present on Asn-782.

As to quaternary structure, efficient DNA binding requires heterodimerization of an alpha and a beta/ARNT subunit. Post-translationally, in normoxia, is hydroxylated on Pro-404 and Pro-560. The hydroxylated prolines promote interaction with VHL, initiating rapid ubiquitination and subsequent proteasomal degradation. Under hypoxia, proline hydroxylation is impaired and ubiquitination is attenuated, resulting in stabilization. In normoxia, is hydroxylated on Asn-782, thus abrogating interaction with CREBBP and EP300 and preventing transcriptional activation. In terms of processing, the iron and 2-oxoglutarate dependent 3-hydroxylation of asparagine is (S) stereospecific within HIF CTAD domains.

It is found in the cytoplasm. The protein resides in the nucleus. Its subcellular location is the nucleus speckle. Its activity is regulated as follows. Induced by reactive oxygen species (ROS). Functions as a master transcriptional regulator of the adaptive response to hypoxia. Under hypoxic conditions, activates the transcription of over 40 genes, including erythropoietin, glucose transporters, glycolytic enzymes, vascular endothelial growth factor, HILPDA, and other genes whose protein products increase oxygen delivery or facilitate metabolic adaptation to hypoxia. Plays an essential role in embryonic vascularization, tumor angiogenesis and pathophysiology of ischemic disease. This is Hypoxia-inducible factor 1-alpha (hif1a) from Xenopus laevis (African clawed frog).